The chain runs to 326 residues: Probable fructokinase-4 (326 aa).

Belongs to the carbohydrate kinase PfkB family.

The enzyme catalyses D-fructose + ATP = D-fructose 6-phosphate + ADP + H(+). Its pathway is glycan biosynthesis; starch biosynthesis. Functionally, may play an important role in maintaining the flux of carbon towards starch formation. The chain is Probable fructokinase-4 from Arabidopsis thaliana (Mouse-ear cress).